Reading from the N-terminus, the 214-residue chain is MSNQKPVLYSYWRSSCSWRVRIALALKNVDYEYKTVDLLSEEAKSKLKEINPAAKVPTFVVDGQVITESLAIIEYLEETHPDVPLLPKDPIKRAHARAISLLVASGIQPLHNLKVLQLLNKKEAGFGGQFAKQFVVEGLTALEILLKQHSGKYAVGDDVTIADLSIPPLIYSANRFNLDLSPYPTVNRINETLADIPAFIAAHPDNQPDTGLNA.

One can recognise a GST N-terminal domain in the interval 4–84 (QKPVLYSYWR…YLEETHPDVP (81 aa)). Residues 14–19 (SSCSWR), Val56, 68–69 (ES), Gln108, and 112–114 (NLK) each bind glutathione. In terms of domain architecture, GST C-terminal spans 89–212 (DPIKRAHARA…HPDNQPDTGL (124 aa)).

The protein belongs to the GST superfamily. Zeta family. Glutathione is required as a cofactor.

Its subcellular location is the cytoplasm. The catalysed reaction is 4-maleylacetoacetate = 4-fumarylacetoacetate. The protein operates within amino-acid degradation; L-phenylalanine degradation; acetoacetate and fumarate from L-phenylalanine: step 5/6. This is Probable maleylacetoacetate isomerase (gst-42) from Caenorhabditis elegans.